The sequence spans 161 residues: SsrA-binding protein (161 aa).

It belongs to the SmpB family.

The protein localises to the cytoplasm. Required for rescue of stalled ribosomes mediated by trans-translation. Binds to transfer-messenger RNA (tmRNA), required for stable association of tmRNA with ribosomes. tmRNA and SmpB together mimic tRNA shape, replacing the anticodon stem-loop with SmpB. tmRNA is encoded by the ssrA gene; the 2 termini fold to resemble tRNA(Ala) and it encodes a 'tag peptide', a short internal open reading frame. During trans-translation Ala-aminoacylated tmRNA acts like a tRNA, entering the A-site of stalled ribosomes, displacing the stalled mRNA. The ribosome then switches to translate the ORF on the tmRNA; the nascent peptide is terminated with the 'tag peptide' encoded by the tmRNA and targeted for degradation. The ribosome is freed to recommence translation, which seems to be the essential function of trans-translation. The chain is SsrA-binding protein from Psychromonas ingrahamii (strain DSM 17664 / CCUG 51855 / 37).